We begin with the raw amino-acid sequence, 216 residues long: Thymidine kinase (216 aa).

Residues 9–16 and 86–89 each bind ATP; these read GTMDCGKS and DEAQ. Residue Glu87 is the Proton acceptor of the active site.

This sequence belongs to the thymidine kinase family. As to quaternary structure, homotetramer.

The protein resides in the cytoplasm. The enzyme catalyses thymidine + ATP = dTMP + ADP + H(+). The sequence is that of Thymidine kinase from Streptomyces avermitilis (strain ATCC 31267 / DSM 46492 / JCM 5070 / NBRC 14893 / NCIMB 12804 / NRRL 8165 / MA-4680).